The following is a 351-amino-acid chain: sn-1 oleoyl-lipid 12-desaturase (351 aa).

The interval 1–20 (MTLSIVKSEDSSSRPSAVPS) is disordered. 2 consecutive transmembrane segments (helical) span residues 44-62 (AWMT…WLGI) and 68-88 (FLLP…FVIG). The short motif at 89–93 (HDCGH) is the Histidine box-1 element. The chain crosses the membrane as a helical span at residues 100–120 (VWVNDWVGHILFLPIIYPFHS). The short motif at 125-129 (HNQHH) is the Histidine box-2 element. Transmembrane regions (helical) follow at residues 199–219 (LLVI…IGVW) and 221–241 (FVKF…TFTL). The short motif at 289 to 293 (HHVTT) is the Histidine box-3 element.

Belongs to the fatty acid desaturase type 2 family. The cofactor is Fe(2+).

The protein localises to the cellular thylakoid membrane. The catalysed reaction is a 1-[(9Z)-octadecenoyl]-2-acyl-glycerolipid + 2 reduced [2Fe-2S]-[ferredoxin] + O2 + 2 H(+) = a 1-[(9Z,12Z)-octadecdienoyl]-2-acyl-glycerolipid + 2 oxidized [2Fe-2S]-[ferredoxin] + 2 H2O. It participates in lipid metabolism; polyunsaturated fatty acid biosynthesis. Functionally, desaturase involved in fatty acid biosynthesis. Introduces a double bond at carbon 12 of oleoyl groups (18:1) attached to the sn-1 position of the glycerol moiety of membrane glycerolipids. This Arthrospira platensis (Spirulina platensis) protein is sn-1 oleoyl-lipid 12-desaturase.